A 289-amino-acid chain; its full sequence is Mas-related G-protein coupled receptor member G (289 aa).

Topologically, residues 1 to 13 (MLSIFNIWGTFNR) are extracellular. A helical membrane pass occupies residues 14–34 (VLFFLSLTVSLAGLAGNTLLL). Topologically, residues 35–49 (WHLGLRIKKGPFNTY) are cytoplasmic. A helical membrane pass occupies residues 50 to 70 (LLHLAAADFLFLSCQVGFSIA). Topologically, residues 71-80 (KIASGYEDTL) are extracellular. Residues 81–101 (YFPVTFLWFAVGLWLLAAFIV) traverse the membrane as a helical segment. Topologically, residues 102 to 123 (DCCLSYMFPSFCGPNCRPRYTS) are cytoplasmic. The helical transmembrane segment at 124 to 144 (FVLCLVIWALTMLAVLLPANA) threads the bilayer. Residues 145-164 (CGLLYNRMSLLVCLKYHWVS) lie on the Extracellular side of the membrane. A helical transmembrane segment spans residues 165–185 (VVWLGVLASTACGASMFLLVF). Over 186 to 200 (GNCCSSQPPSKFCKL) the chain is Cytoplasmic. A helical transmembrane segment spans residues 201-221 (AQCSGILLFFCRLPLVFYWCL). Arg-222 is a topological domain (extracellular). The chain crosses the membrane as a helical span at residues 223–243 (PVIKFLLPFFFPLATLLACID). Residues 244-289 (SSAKPLLYYLKGRQLRKEPLQVALNRALGEESQSSSGGISLPMSRV) are Cytoplasmic-facing.

This sequence belongs to the G-protein coupled receptor 1 family. Mas subfamily.

The protein localises to the cell membrane. Orphan receptor. May regulate nociceptor function and/or development, including the sensation or modulation of pain. This is Mas-related G-protein coupled receptor member G (Mrgprg) from Rattus norvegicus (Rat).